The following is a 363-amino-acid chain: Flagellar P-ring protein 2 (363 aa).

Residues 1 to 18 (MLIRLLLLVICLAGPGVA) form the signal peptide.

It belongs to the FlgI family. The basal body constitutes a major portion of the flagellar organelle and consists of four rings (L,P,S, and M) mounted on a central rod.

Its subcellular location is the periplasm. The protein localises to the bacterial flagellum basal body. Its function is as follows. Assembles around the rod to form the L-ring and probably protects the motor/basal body from shearing forces during rotation. The protein is Flagellar P-ring protein 2 of Cereibacter sphaeroides (strain ATCC 17023 / DSM 158 / JCM 6121 / CCUG 31486 / LMG 2827 / NBRC 12203 / NCIMB 8253 / ATH 2.4.1.) (Rhodobacter sphaeroides).